The following is a 1045-amino-acid chain: MDIS1-interacting receptor like kinase 2 (1045 aa).

Residues 1–43 (MNKTNPERKISLTSFKERMACKEKPRDLQVLLIISIVLSCSFA) form the signal peptide. At 44 to 709 (VSATVEEANA…SKKSHKDRNL (666 aa)) the chain is on the extracellular side. 4 N-linked (GlcNAc...) asparagine glycosylation sites follow: Asn63, Asn77, Asn99, and Asn119. LRR repeat units follow at residues 92–116 (LGSI…PFSS), 117–140 (LPNL…LWGR), 141–165 (FSKL…LGDL), 166–189 (SNLD…IGRL), 191–212 (KVTE…SFGN), 213–237 (LTKL…IGNL), 238–260 (PNLR…SFGN), 262–285 (KNVT…IGNM), 286–309 (TALD…LGNI), 311–333 (TLAV…LGEM), 334–356 (ESMI…SFGK), 357–381 (LTAL…IANS), 383–405 (ELTV…ICRG), 406–429 (GKLE…LRDC), 431–452 (SLIR…AFGV), 453–476 (YPTL…NWEQ), 477–501 (SQKL…IWNM), 502–525 (TQLS…ISNI), 527–549 (RISK…IRLL), 550–573 (TNLE…LNNL), 575–597 (RLYY…LTKL), 598–620 (SQLQ…QFRS), 621–644 (LQNL…SFKD), and 646–670 (LALT…AFRN). Asn179 and Asn212 each carry an N-linked (GlcNAc...) asparagine glycan. Residues Asn249, Asn263, and Asn284 are each glycosylated (N-linked (GlcNAc...) asparagine). The N-linked (GlcNAc...) asparagine glycan is linked to Asn323. N-linked (GlcNAc...) asparagine glycans are attached at residues Asn380, Asn393, and Asn410. Asn487 and Asn500 each carry an N-linked (GlcNAc...) asparagine glycan. Asn580 carries N-linked (GlcNAc...) asparagine glycosylation. The N-linked (GlcNAc...) asparagine glycan is linked to Asn633. Asn687 is a glycosylation site (N-linked (GlcNAc...) asparagine). A helical membrane pass occupies residues 710-730 (IIYILVPIIGAIIILSVCAGI). The Cytoplasmic portion of the chain corresponds to 731–1045 (FICFRKRTKQ…TMLSISTAFS (315 aa)). A Phosphothreonine modification is found at Thr772. The 271-residue stretch at 775 to 1045 (FDPKYLIGTG…TMLSISTAFS (271 aa)) folds into the Protein kinase domain. Residues 781–789 (IGTGGHGKV) and Lys802 contribute to the ATP site. A phosphotyrosine mark is found at Tyr853 and Tyr892. Asp905 serves as the catalytic Proton acceptor. Ser938 is subject to Phosphoserine. Residues Tyr946 and Tyr953 each carry the phosphotyrosine modification.

It belongs to the protein kinase superfamily. Ser/Thr protein kinase family. In terms of assembly, interacts with MDIS1 and LURE1.2. Binds to SCOOP12; this interaction triggers the formation of complex between MIK2 and the BAK1/SERK3 and SERK4 coreceptors. In terms of tissue distribution, expressed in pollen tubes. Highly expressed in shoots, roots and leaves.

The protein localises to the cell membrane. It catalyses the reaction L-seryl-[protein] + ATP = O-phospho-L-seryl-[protein] + ADP + H(+). It carries out the reaction L-threonyl-[protein] + ATP = O-phospho-L-threonyl-[protein] + ADP + H(+). Its function is as follows. Acts as a receptor of SCOOP peptides from Brassicaceae plants regulating multiple processing including plant growth, development and stress responses. Perception of SCOOP peptides induces the association of MIK2 with the coreceptors BAK1/SERK3 and SERK4 and relays the signaling through the activation of receptor-like cytosolic kinases (RLCKs) BIK1 and PBL1. Also able to detect SCOOP-like proteins (SCOOPL) present in fungal Fusarium spp. and bacterial Comamonadaceae to elicit various immune responses, including growth inhibition, ROS production, calcium Ca(2+) influx, MAPK activation and MYB51 promoter activation in roots, thus being required for resistance to several root pathogens. Involved in the pollen tube perception of the female signal. Required to trigger defense responses toward generalist herbivores such as Spodoptera littoralis, probably via the activation of jasmonate and indole glucosinolate biosynthesis. This Arabidopsis thaliana (Mouse-ear cress) protein is MDIS1-interacting receptor like kinase 2.